The primary structure comprises 490 residues: Betaine aldehyde dehydrogenase (490 aa).

Residue aspartate 93 coordinates K(+). Glycine 150–tryptophan 152 contributes to the NAD(+) binding site. Lysine 162 serves as the catalytic Charge relay system. NAD(+) is bound at residue lysine 176 to glutamate 179. Valine 180 is a binding site for K(+). Glycine 230–serine 233 is an NAD(+) binding site. Position 246 (leucine 246) interacts with K(+). The Proton acceptor role is filled by glutamate 252. NAD(+) is bound by residues glycine 254, cysteine 286, and glutamate 387. Residue cysteine 286 is the Nucleophile of the active site. Cysteine 286 is modified (cysteine sulfenic acid (-SOH)). Residues lysine 457 and glycine 460 each coordinate K(+). Glutamate 464 functions as the Charge relay system in the catalytic mechanism.

Belongs to the aldehyde dehydrogenase family. In terms of assembly, dimer of dimers. Requires K(+) as cofactor.

It catalyses the reaction betaine aldehyde + NAD(+) + H2O = glycine betaine + NADH + 2 H(+). It functions in the pathway amine and polyamine biosynthesis; betaine biosynthesis via choline pathway; betaine from betaine aldehyde: step 1/1. Functionally, involved in the biosynthesis of the osmoprotectant glycine betaine. Catalyzes the irreversible oxidation of betaine aldehyde to the corresponding acid. The protein is Betaine aldehyde dehydrogenase of Yersinia pseudotuberculosis serotype I (strain IP32953).